A 1397-amino-acid polypeptide reads, in one-letter code: DNA-directed RNA polymerase subunit beta' (1397 aa).

Zn(2+) contacts are provided by Cys75, Cys77, Cys90, and Cys93. Asp465, Asp467, and Asp469 together coordinate Mg(2+). Zn(2+)-binding residues include Cys819, Cys893, Cys900, and Cys903.

It belongs to the RNA polymerase beta' chain family. The RNAP catalytic core consists of 2 alpha, 1 beta, 1 beta' and 1 omega subunit. When a sigma factor is associated with the core the holoenzyme is formed, which can initiate transcription. Mg(2+) is required as a cofactor. Requires Zn(2+) as cofactor.

The enzyme catalyses RNA(n) + a ribonucleoside 5'-triphosphate = RNA(n+1) + diphosphate. DNA-dependent RNA polymerase catalyzes the transcription of DNA into RNA using the four ribonucleoside triphosphates as substrates. The chain is DNA-directed RNA polymerase subunit beta' from Acinetobacter baylyi (strain ATCC 33305 / BD413 / ADP1).